The sequence spans 714 residues: VIN3-like protein 2 (714 aa).

Residues 164–232 form a PHD-type zinc finger; it reads RCSCCICRKY…CFYCVSCGKA (69 aa). The Nuclear localization signal signature appears at 239–246; sequence WKKQLTIA. The Fibronectin type-III domain occupies 366 to 463; that stretch reads GSTKIRFEDV…INVLTRSAEE (98 aa). Residues 478–498 show a composition bias toward polar residues; the sequence is LTNCSTLSSNPSSVEAESNND. The tract at residues 478–530 is disordered; sequence LTNCSTLSSNPSSVEAESNNDYIVPKKPSSKNEDNNSPSVDESAAKRMKRTTD. The tract at residues 602–714 is VIN3-Interacting Domain (VID); it reads SMKDNCNNGD…PSGFCMKLWH (113 aa).

Self-interacts. Interacts with VIN3 and VIL1. Component of the plant homeodomain / polycomb repressive complex 2 (PHD-PRC2) large complex during prolonged cold, composed of core PRC2 components (VRN2, EZA1, FIE and MSI1), and three related PHD finger proteins (VIL1, VIL2 and VIN3) that mediates histone H3 trimethylation on 'Lys-27' (H3K27me3).

The protein localises to the nucleus. Functionally, maybe involved in both the vernalization and photoperiod pathways by regulating gene expression. Binds preferentially to dimethylated histone H3 'Lys-9' (H3K9me2). Promotes flowering in non-inductive photoperiods (e.g. short days) through the maintenance of the epigenetically repressed state of MAF5 via H3K9me2 and plant homeodomain / polycomb repressive complex 2 (PHD-PRC2)-dependent H3K27me3. In Arabidopsis thaliana (Mouse-ear cress), this protein is VIN3-like protein 2 (VIL2).